Here is a 291-residue protein sequence, read N- to C-terminus: Ribosomal RNA small subunit methyltransferase A (291 aa).

Positions 37, 39, 64, 85, 110, and 131 each coordinate S-adenosyl-L-methionine.

Belongs to the class I-like SAM-binding methyltransferase superfamily. rRNA adenine N(6)-methyltransferase family. RsmA subfamily.

Its subcellular location is the cytoplasm. The enzyme catalyses adenosine(1518)/adenosine(1519) in 16S rRNA + 4 S-adenosyl-L-methionine = N(6)-dimethyladenosine(1518)/N(6)-dimethyladenosine(1519) in 16S rRNA + 4 S-adenosyl-L-homocysteine + 4 H(+). Its function is as follows. Specifically dimethylates two adjacent adenosines (A1518 and A1519) in the loop of a conserved hairpin near the 3'-end of 16S rRNA in the 30S particle. May play a critical role in biogenesis of 30S subunits. This chain is Ribosomal RNA small subunit methyltransferase A, found in Dehalococcoides mccartyi (strain CBDB1).